The primary structure comprises 397 residues: Succinate--CoA ligase [ADP-forming] subunit beta (397 aa).

An ATP-grasp domain is found at 9 to 254; sequence KALLAQYGAP…ETEEDPKELA (246 aa). ATP-binding positions include lysine 46, 53–55, glutamate 109, serine 112, and glutamate 117; that span reads GRG. Asparagine 209 and aspartate 223 together coordinate Mg(2+). Substrate contacts are provided by residues asparagine 274 and 331–333; that span reads GIM.

It belongs to the succinate/malate CoA ligase beta subunit family. Heterotetramer of two alpha and two beta subunits. It depends on Mg(2+) as a cofactor.

It carries out the reaction succinate + ATP + CoA = succinyl-CoA + ADP + phosphate. It catalyses the reaction GTP + succinate + CoA = succinyl-CoA + GDP + phosphate. The protein operates within carbohydrate metabolism; tricarboxylic acid cycle; succinate from succinyl-CoA (ligase route): step 1/1. In terms of biological role, succinyl-CoA synthetase functions in the citric acid cycle (TCA), coupling the hydrolysis of succinyl-CoA to the synthesis of either ATP or GTP and thus represents the only step of substrate-level phosphorylation in the TCA. The beta subunit provides nucleotide specificity of the enzyme and binds the substrate succinate, while the binding sites for coenzyme A and phosphate are found in the alpha subunit. The polypeptide is Succinate--CoA ligase [ADP-forming] subunit beta (Jannaschia sp. (strain CCS1)).